Reading from the N-terminus, the 87-residue chain is Scorpine-like peptide Tco 41.46-2 (87 aa).

An N-terminal signal peptide occupies residues 1–19 (MERKLALLLFLGMVTLASC). The BetaSPN-type CS-alpha/beta domain occupies 53–87 (QFGCPAYEGYCNNHCQDIERKDGECHGFKCKCAKD). 3 disulfides stabilise this stretch: Cys56–Cys77, Cys63–Cys82, and Cys67–Cys84.

Belongs to the long chain scorpion toxin family. Class 1 subfamily. Expressed by the venom gland.

The protein localises to the secreted. In terms of biological role, may have antibacterial activity. Functionally, inhibits voltage-gated potassium channel. Does not induce hemolytic activity, lactate dehydrogenase (LDH) release from mast cells, mast cell degranulation, and antimicrobial effects. In vivo, injection into mice causes moderate edema formation, but induces very weak or no change in nociceptive sensibility. It also reduces mice locomotion, suggesting an increase in anxiety, but causes no alteration in rearing (standing on hind limbs). In Tityus costatus (Brazilian scorpion), this protein is Scorpine-like peptide Tco 41.46-2.